Here is a 131-residue protein sequence, read N- to C-terminus: Small ribosomal subunit protein bS6m (131 aa).

It belongs to the bacterial ribosomal protein bS6 family. As to quaternary structure, component of the mitochondrial small ribosomal subunit (mt-SSU). Mature yeast 74S mitochondrial ribosomes consist of a small (37S) and a large (54S) subunit. The 37S small subunit contains a 15S ribosomal RNA (15S mt-rRNA) and 34 different proteins. The 54S large subunit contains a 21S rRNA (21S mt-rRNA) and 46 different proteins.

It is found in the mitochondrion. Its function is as follows. Component of the mitochondrial ribosome (mitoribosome), a dedicated translation machinery responsible for the synthesis of mitochondrial genome-encoded proteins, including at least some of the essential transmembrane subunits of the mitochondrial respiratory chain. The mitoribosomes are attached to the mitochondrial inner membrane and translation products are cotranslationally integrated into the membrane. This Saccharomyces cerevisiae (strain ATCC 204508 / S288c) (Baker's yeast) protein is Small ribosomal subunit protein bS6m (MRP17).